A 395-amino-acid chain; its full sequence is NAD(P)H-quinone oxidoreductase subunit H, chloroplastic (395 aa).

Belongs to the complex I 49 kDa subunit family. NDH is composed of at least 16 different subunits, 5 of which are encoded in the nucleus.

The protein resides in the plastid. It localises to the chloroplast thylakoid membrane. The enzyme catalyses a plastoquinone + NADH + (n+1) H(+)(in) = a plastoquinol + NAD(+) + n H(+)(out). The catalysed reaction is a plastoquinone + NADPH + (n+1) H(+)(in) = a plastoquinol + NADP(+) + n H(+)(out). Its function is as follows. NDH shuttles electrons from NAD(P)H:plastoquinone, via FMN and iron-sulfur (Fe-S) centers, to quinones in the photosynthetic chain and possibly in a chloroplast respiratory chain. The immediate electron acceptor for the enzyme in this species is believed to be plastoquinone. Couples the redox reaction to proton translocation, and thus conserves the redox energy in a proton gradient. The protein is NAD(P)H-quinone oxidoreductase subunit H, chloroplastic of Chloranthus spicatus (Chulantree).